The primary structure comprises 1067 residues: Glycine--tRNA ligase, chloroplastic/mitochondrial 2 (1067 aa).

A chloroplast and mitochondrion-targeting transit peptide spans 1–50 (MAILHFSLPLIVSFLRPHASPRFFLLPRSLSQSPFLSRRRFHRTSAVSSA). Residue Glu513 participates in substrate binding. ATP-binding positions include 589–596 (RNSGINIE), 619–624 (LVVPQN), 744–745 (RL), and 859–862 (GLRR). Substrate is bound at residue 624 to 628 (NLLNE). 855–859 (NDPFG) provides a ligand contact to substrate.

The protein belongs to the class-II aminoacyl-tRNA synthetase family. As to quaternary structure, homodimer.

It localises to the plastid. The protein resides in the chloroplast. The protein localises to the mitochondrion. The enzyme catalyses tRNA(Gly) + glycine + ATP = glycyl-tRNA(Gly) + AMP + diphosphate. Functionally, catalyzes the attachment of glycine to tRNA(Gly). Is also able produce diadenosine tetraphosphate (Ap4A), a universal pleiotropic signaling molecule needed for cell regulation pathways, by direct condensation of 2 ATPs. The chain is Glycine--tRNA ligase, chloroplastic/mitochondrial 2 from Arabidopsis thaliana (Mouse-ear cress).